The primary structure comprises 1042 residues: Elongation factor 3 (1042 aa).

HEAT repeat units follow at residues 9–46, 86–124, 167–204, 206–242, 243–280, and 289–327; these read KVLM…DPDT, PYLV…TMNP, YRLP…LISN, DIDK…EVHA, STLS…LVED, and PKLI…VKEG. 2 ABC transporter domains span residues 425–642 and 668–994; these read EEGE…YQDI and CRMR…EQEE. 4 residues coordinate ADP: Asn-704, Glu-923, Asn-926, and His-952. Residues 1009–1042 are disordered; the sequence is KKAKKLTSSELRKKKKERMARRKKGEEVFSDEDD. Basic residues predominate over residues 1020-1031; the sequence is RKKKKERMARRK.

Belongs to the ABC transporter superfamily. ABCF family. EF3 subfamily. In terms of assembly, monomer.

It is found in the cytoplasm. It carries out the reaction ATP + H2O = ADP + phosphate + H(+). The protein operates within protein biosynthesis; polypeptide chain elongation. In terms of biological role, ribosome-dependent ATPase that functions in cytoplasmic translation elongation. Required for the ATP-dependent release of deacylated tRNA from the ribosomal E-site during protein biosynthesis. Stimulates the eEF1A-dependent binding of aminoacyl-tRNA to the ribosomal A-site, which has reduced affinity for tRNA as long as the E-site is occupied. Assists translation termination by stimulating the release of nascent protein from the ribosome by release factors. This is Elongation factor 3 (TEF3) from Pneumocystis carinii.